Here is a 108-residue protein sequence, read N- to C-terminus: Cell cycle protein GpsB (108 aa).

A coiled-coil region spans residues 32 to 69 (LDNVIKDYENFNAQIEALKAENEALKKAKYQARNTVSA).

The protein belongs to the GpsB family. Forms polymers through the coiled coil domains. Interacts with PBP1, MreC and EzrA.

The protein localises to the cytoplasm. Divisome component that associates with the complex late in its assembly, after the Z-ring is formed, and is dependent on DivIC and PBP2B for its recruitment to the divisome. Together with EzrA, is a key component of the system that regulates PBP1 localization during cell cycle progression. Its main role could be the removal of PBP1 from the cell pole after pole maturation is completed. Also contributes to the recruitment of PBP1 to the division complex. Not essential for septum formation. The protein is Cell cycle protein GpsB of Streptococcus pyogenes serotype M49 (strain NZ131).